Here is a 281-residue protein sequence, read N- to C-terminus: Acetyl-coenzyme A carboxylase carboxyl transferase subunit beta 2 (281 aa).

The 256-residue stretch at 26 to 281 (LLTRCPVCHE…TITQGGHQDV (256 aa)) folds into the CoA carboxyltransferase N-terminal domain. Zn(2+) contacts are provided by Cys30, Cys33, Cys48, and Cys51. Residues 30–51 (CPVCHEDCYTQDLGEFKVCPHC) form a C4-type zinc finger.

It belongs to the AccD/PCCB family. As to quaternary structure, acetyl-CoA carboxylase is a heterohexamer composed of biotin carboxyl carrier protein (AccB), biotin carboxylase (AccC) and two subunits each of ACCase subunit alpha (AccA) and ACCase subunit beta (AccD). Zn(2+) serves as cofactor.

Its subcellular location is the cytoplasm. It carries out the reaction N(6)-carboxybiotinyl-L-lysyl-[protein] + acetyl-CoA = N(6)-biotinyl-L-lysyl-[protein] + malonyl-CoA. The protein operates within lipid metabolism; malonyl-CoA biosynthesis; malonyl-CoA from acetyl-CoA: step 1/1. Component of the acetyl coenzyme A carboxylase (ACC) complex. Biotin carboxylase (BC) catalyzes the carboxylation of biotin on its carrier protein (BCCP) and then the CO(2) group is transferred by the transcarboxylase to acetyl-CoA to form malonyl-CoA. This Lactiplantibacillus plantarum (strain JDM1) (Lactobacillus plantarum) protein is Acetyl-coenzyme A carboxylase carboxyl transferase subunit beta 2.